A 188-amino-acid chain; its full sequence is UPF0398 protein SSP1297 (188 aa).

Belongs to the UPF0398 family.

The polypeptide is UPF0398 protein SSP1297 (Staphylococcus saprophyticus subsp. saprophyticus (strain ATCC 15305 / DSM 20229 / NCIMB 8711 / NCTC 7292 / S-41)).